The following is a 211-amino-acid chain: tRNA (guanosine(18)-2'-O)-methyltransferase (211 aa).

S-adenosyl-L-methionine contacts are provided by Thr103, Ile146, and Leu155.

Belongs to the class IV-like SAM-binding methyltransferase superfamily. RNA methyltransferase TrmH family. As to quaternary structure, homodimer.

It carries out the reaction guanosine(18) in tRNA + S-adenosyl-L-methionine = 2'-O-methylguanosine(18) in tRNA + S-adenosyl-L-homocysteine + H(+). Catalyzes the 2'-O methylation of guanosine at position 18 in tRNA. Type II methylase, which methylates only a subset of tRNA species. This chain is tRNA (guanosine(18)-2'-O)-methyltransferase, found in Aquifex aeolicus (strain VF5).